The chain runs to 284 residues: Trimeric intracellular cation channel type B-B (284 aa).

The Lumenal segment spans residues methionine 1–serine 15. Residues methionine 16–alanine 32 form a helical membrane-spanning segment. The Cytoplasmic segment spans residues arginine 33 to histidine 44. A helical transmembrane segment spans residues serine 45 to leucine 68. Residues alanine 69–threonine 79 are Lumenal-facing. A helical membrane pass occupies residues threonine 80 to leucine 99. At phenylalanine 100–asparagine 102 the chain is on the cytoplasmic side. A helical membrane pass occupies residues cysteine 103–arginine 121. A 1,2-diacyl-sn-glycero-3-phospho-(1D-myo-inositol-4,5-bisphosphate) contacts are provided by lysine 117 and arginine 121. Residues threonine 122–alanine 139 lie on the Lumenal side of the membrane. The helical transmembrane segment at tryptophan 140–isoleucine 157 threads the bilayer. Topologically, residues serine 158–methionine 178 are cytoplasmic. A helical transmembrane segment spans residues serine 179–histidine 196. Topologically, residues glycine 197 to arginine 204 are lumenal. Residues histidine 205–threonine 225 traverse the membrane as a helical segment. Topologically, residues histidine 226 to lysine 284 are cytoplasmic. The tract at residues glutamine 250 to lysine 284 is disordered. Residues lysine 269 to lysine 284 show a composition bias toward basic and acidic residues.

Belongs to the TMEM38 family. Homotrimer; conformation seems to be controled by binding to diacylglycerol (DAG).

The protein localises to the endoplasmic reticulum membrane. It carries out the reaction K(+)(in) = K(+)(out). With respect to regulation, channel activity is activated by increased cytosolic Ca(2+) levels and blocked by luminal high Ca(2+) levels. Its function is as follows. Intracellular monovalent cation channel required for maintenance of rapid intracellular calcium release. Acts as a potassium counter-ion channel that functions in synchronization with calcium release from intracellular stores. Activated by increased cytosolic Ca(2+) levels. The polypeptide is Trimeric intracellular cation channel type B-B (tmem38b-b) (Xenopus laevis (African clawed frog)).